A 240-amino-acid chain; its full sequence is Phosphoribosylaminoimidazole-succinocarboxamide synthase (240 aa).

Belongs to the SAICAR synthetase family.

The enzyme catalyses 5-amino-1-(5-phospho-D-ribosyl)imidazole-4-carboxylate + L-aspartate + ATP = (2S)-2-[5-amino-1-(5-phospho-beta-D-ribosyl)imidazole-4-carboxamido]succinate + ADP + phosphate + 2 H(+). The protein operates within purine metabolism; IMP biosynthesis via de novo pathway; 5-amino-1-(5-phospho-D-ribosyl)imidazole-4-carboxamide from 5-amino-1-(5-phospho-D-ribosyl)imidazole-4-carboxylate: step 1/2. In Wigglesworthia glossinidia brevipalpis, this protein is Phosphoribosylaminoimidazole-succinocarboxamide synthase.